Reading from the N-terminus, the 254-residue chain is Sec-independent protein translocase protein TatC (254 aa).

The next 6 membrane-spanning stretches (helical) occupy residues 40-60, 82-104, 125-145, 172-192, 210-230, and 233-253; these read IFLSLGAVLVGVVACFIFVKP, FFFVSVKVAGYSGILVMSPFILY, VVLGSSVLFFAGLGFAYYALI, FVLLLMFSTGLAFQIPIIQVV, FVILGAMVLGAILTPSTDPLT, and LLAGAVLGLYFGGIGCVRLLG.

The protein belongs to the TatC family. In terms of assembly, forms a complex with TatA.

It localises to the cell inner membrane. Its function is as follows. Part of the twin-arginine translocation (Tat) system that transports large folded proteins containing a characteristic twin-arginine motif in their signal peptide across membranes. In Synechocystis sp. (strain ATCC 27184 / PCC 6803 / Kazusa), this protein is Sec-independent protein translocase protein TatC.